Consider the following 207-residue polypeptide: Serotonin N-acetyltransferase (207 aa).

Position 31 is a phosphothreonine; by PKA (T31). Residues 35-194 form the N-acetyltransferase domain; the sequence is SEFRCLTPQD…SLTFMELQCS (160 aa). L124 provides a ligand contact to substrate. Residues 124-126 and 132-137 each bind acetyl-CoA; these read LAV and QQGKGS. A substrate-binding site is contributed by M159. 168–170 serves as a coordination point for acetyl-CoA; that stretch reads YEK. S205 is modified (phosphoserine).

Belongs to the acetyltransferase family. AANAT subfamily. As to quaternary structure, monomer. Interacts with several 14-3-3 proteins, including YWHAB, YWHAE, YWHAG and YWHAZ, preferentially when phosphorylated at Thr-31. Phosphorylation on Ser-205 also allows binding to YWHAZ, but with lower affinity. The interaction with YWHAZ considerably increases affinity for arylalkylamines and acetyl-CoA and protects the enzyme from dephosphorylation and proteasomal degradation. It may also prevent thiol-dependent inactivation. In terms of processing, cAMP-dependent phosphorylation on both N-terminal Thr-31 and C-terminal Ser-205 regulates AANAT activity by promoting interaction with 14-3-3 proteins. Highly expressed in pineal gland and retina. Also detected in heart and intestine.

The protein localises to the cytoplasm. It carries out the reaction a 2-arylethylamine + acetyl-CoA = an N-acetyl-2-arylethylamine + CoA + H(+). It functions in the pathway aromatic compound metabolism; melatonin biosynthesis; melatonin from serotonin: step 1/2. In terms of biological role, controls the night/day rhythm of melatonin production in the pineal gland. Catalyzes the N-acetylation of serotonin into N-acetylserotonin, the penultimate step in the synthesis of melatonin. The chain is Serotonin N-acetyltransferase (AANAT) from Mesocricetus auratus (Golden hamster).